The following is a 148-amino-acid chain: Large ribosomal subunit protein bL9 (148 aa).

It belongs to the bacterial ribosomal protein bL9 family.

Its function is as follows. Binds to the 23S rRNA. The sequence is that of Large ribosomal subunit protein bL9 from Bacillus cereus (strain B4264).